The sequence spans 386 residues: Phosphoglycerate kinase (386 aa).

Substrate is bound by residues 21–23, Arg36, 59–62, Arg113, and Arg146; these read DLN and HLGR. ATP-binding positions include Lys197, Glu314, and 340–343; that span reads GGDT.

It belongs to the phosphoglycerate kinase family. Monomer.

The protein localises to the cytoplasm. It catalyses the reaction (2R)-3-phosphoglycerate + ATP = (2R)-3-phospho-glyceroyl phosphate + ADP. Its pathway is carbohydrate degradation; glycolysis; pyruvate from D-glyceraldehyde 3-phosphate: step 2/5. This chain is Phosphoglycerate kinase, found in Ectopseudomonas mendocina (strain ymp) (Pseudomonas mendocina).